Reading from the N-terminus, the 711-residue chain is Polyribonucleotide nucleotidyltransferase (711 aa).

Residues aspartate 486 and aspartate 492 each coordinate Mg(2+). A KH domain is found at 553 to 612; it reads PRIHTIKINPDKIKDVIGKGGSVIRALTEETGTTIEIEDDGTVKIAATDGEKAKHAIRRI. The S1 motif domain occupies 622–690; it reads GRVYTGKVTR…RQGRIRLSIK (69 aa). Residues 689–711 form a disordered region; the sequence is IKEATEQSQPAAAPEAPAAEQGE. The segment covering 694–711 has biased composition (low complexity); sequence EQSQPAAAPEAPAAEQGE.

It belongs to the polyribonucleotide nucleotidyltransferase family. In terms of assembly, component of the RNA degradosome, which is a multiprotein complex involved in RNA processing and mRNA degradation. The cofactor is Mg(2+).

The protein localises to the cytoplasm. It catalyses the reaction RNA(n+1) + phosphate = RNA(n) + a ribonucleoside 5'-diphosphate. Its function is as follows. Involved in mRNA degradation. Catalyzes the phosphorolysis of single-stranded polyribonucleotides processively in the 3'- to 5'-direction. The polypeptide is Polyribonucleotide nucleotidyltransferase (Escherichia coli (strain SE11)).